The following is a 319-amino-acid chain: Olfactory receptor 10Q1 (319 aa).

The Extracellular portion of the chain corresponds to 1 to 29; the sequence is MPVGKLVFNQSEPTEFVFRAFTTATEFQV. Residue Asn-9 is glycosylated (N-linked (GlcNAc...) asparagine). The chain crosses the membrane as a helical span at residues 30–50; the sequence is LLFLLFLLLYLMILCGNTAII. Residues 51–58 are Cytoplasmic-facing; it reads WVVCTHST. Residues 59-79 traverse the membrane as a helical segment; that stretch reads LRTPMYFFLSNLSFLELCYTT. Residues 80–103 are Extracellular-facing; the sequence is VVVPLMLSNILGAQKPISLAGCGA. Cys-101 and Cys-194 are joined by a disulfide. Residues 104 to 124 form a helical membrane-spanning segment; that stretch reads QMFFFVTLGSTDCFLLAIMAY. Residues 125-143 lie on the Cytoplasmic side of the membrane; that stretch reads DRYVAICHPLHYTLIMTRE. Residues 144 to 164 traverse the membrane as a helical segment; the sequence is LCTQMLGGALGLALFPSLQLT. Topologically, residues 165-202 are extracellular; it reads ALIFTLPFCGHHQEINHFLCDVPPVLRLACADIRVHQA. A helical membrane pass occupies residues 203–222; it reads VLYVVSILVLTIPFLLICVS. At 223–242 the chain is on the cytoplasmic side; the sequence is YVFITCAILSIRSAEGRRRA. Residues 243-263 traverse the membrane as a helical segment; it reads FSTCSFHLTVVLLQYGCCSLV. The Extracellular segment spans residues 264-276; the sequence is YLRPRSSTSEDED. The helical transmembrane segment at 277 to 297 threads the bilayer; that stretch reads SQIALVYTFVTPLLNPLLYSL. The Cytoplasmic segment spans residues 298–319; that stretch reads RNKDVKGALRSAIIRKAASDAN.

It belongs to the G-protein coupled receptor 1 family.

It localises to the cell membrane. In terms of biological role, odorant receptor. The polypeptide is Olfactory receptor 10Q1 (OR10Q1) (Homo sapiens (Human)).